The sequence spans 561 residues: TBC1 domain family member 24 (561 aa).

Residues lysine 36 and arginine 40 each contribute to the a 1,2-diacyl-sn-glycero-3-phospho-(1D-myo-inositol) site. The 192-residue stretch at 45 to 236 (AQSHTLRGKV…RVFDVFLVEG (192 aa)) folds into the Rab-GAP TBC domain. Residues lysine 238, arginine 242, and 293–297 (RLFSR) each bind a 1,2-diacyl-sn-glycero-3-phospho-(1D-myo-inositol). The TLDc domain maps to 343 to 556 (EIVSVKEMRD…IAAVEAWGFQ (214 aa)). Phosphoserine occurs at positions 475 and 482.

As to quaternary structure, interacts with ARF6. As to expression, expressed in brain, particularly at the level of the cortex and the hippocampus. Expressed in the inner ear in spiral ganglion cells, a collection of neurons critical for hearing and balance.

The protein localises to the cell membrane. It localises to the cytoplasm. It is found in the cytoplasmic vesicle membrane. The protein resides in the presynapse. May act as a GTPase-activating protein for Rab family protein(s). Involved in neuronal projections development, probably through a negative modulation of ARF6 function. Involved in the regulation of synaptic vesicle trafficking. This is TBC1 domain family member 24 (Tbc1d24) from Mus musculus (Mouse).